The sequence spans 250 residues: 5'-nucleotidase SurE (250 aa).

Residues aspartate 8, aspartate 9, serine 39, and asparagine 95 each contribute to the a divalent metal cation site.

It belongs to the SurE nucleotidase family. A divalent metal cation is required as a cofactor.

Its subcellular location is the cytoplasm. It catalyses the reaction a ribonucleoside 5'-phosphate + H2O = a ribonucleoside + phosphate. In terms of biological role, nucleotidase that shows phosphatase activity on nucleoside 5'-monophosphates. This is 5'-nucleotidase SurE from Cupriavidus taiwanensis (strain DSM 17343 / BCRC 17206 / CCUG 44338 / CIP 107171 / LMG 19424 / R1) (Ralstonia taiwanensis (strain LMG 19424)).